A 126-amino-acid polypeptide reads, in one-letter code: Fluoride-specific ion channel FluC 1 (126 aa).

3 helical membrane-spanning segments follow: residues 37–57 (HWGT…VLAL), 67–87 (IALL…TFVV), and 98–118 (LLAA…AAAA). Residues glycine 77 and serine 80 each coordinate Na(+).

The protein belongs to the fluoride channel Fluc/FEX (TC 1.A.43) family.

The protein localises to the cell inner membrane. It catalyses the reaction fluoride(in) = fluoride(out). Its activity is regulated as follows. Na(+) is not transported, but it plays an essential structural role and its presence is essential for fluoride channel function. Its function is as follows. Fluoride-specific ion channel. Important for reducing fluoride concentration in the cell, thus reducing its toxicity. The polypeptide is Fluoride-specific ion channel FluC 1 (Parasynechococcus marenigrum (strain WH8102)).